Here is a 124-residue protein sequence, read N- to C-terminus: BLOC-1-related complex subunit 8 (124 aa).

The tract at residues 102–124 (SSSQGRSAVINPNETPAHTSVTP) is disordered.

The protein belongs to the BORCS8 family.

It is found in the lysosome membrane. In terms of biological role, as part of a BORC-like complex, it may play a role in the movement and localization of lysosomes at the cell periphery. Associated with the cytosolic face of lysosomes, this complex may couple lysosomes to microtubule plus-end-directed kinesin motors, driving lysosome movement toward the cell periphery. This chain is BLOC-1-related complex subunit 8, found in Danio rerio (Zebrafish).